A 291-amino-acid chain; its full sequence is Beta-lactamase CTX-M-25 (291 aa).

The first 30 residues, 1–30, serve as a signal peptide directing secretion; the sequence is MMRKSVRRAMLMTTACVSLLLASVPLCAQA. The active-site Nucleophile; acyl-ester intermediate is the Ser-73. Lys-76, Ser-133, Glu-169, and Ser-240 together coordinate a beta-lactam.

The protein belongs to the class-A beta-lactamase family. As to quaternary structure, monomer.

The protein resides in the secreted. The enzyme catalyses a beta-lactam + H2O = a substituted beta-amino acid. Its activity is regulated as follows. Inhibited by the beta-lactamase-blocking agents clavulanic acid and tazobactam; in the DH10B strain. Extended-spectrum beta-lactamase (ESBL) which confers resistance to penicillins, as well as first, second and third-generation cephalosporins. Has cefotaxime-hydrolyzing activity. Inactive against cephalosporin antibiotic, cefoxitin, and the carbapenem, imipenem. The protein is Beta-lactamase CTX-M-25 of Escherichia coli.